Here is a 674-residue protein sequence, read N- to C-terminus: Polyunsaturated fatty acid 5-lipoxygenase (674 aa).

Positions 2–118 constitute a PLAT domain; sequence PSYTVTVATG…EIVLRDGRAK (117 aa). Glycine 17, threonine 18, aspartate 19, asparagine 44, aspartate 45, glutamate 47, aspartate 79, and aspartate 80 together coordinate Ca(2+). The 556-residue stretch at 119–674 folds into the Lipoxygenase domain; the sequence is LARDDQIHIL…PDRIPNSVAI (556 aa). Serine 272 carries the phosphoserine modification. 2 residues coordinate Fe cation: histidine 368 and histidine 373. Position 524 is a phosphoserine (serine 524). Histidine 551, asparagine 555, and isoleucine 674 together coordinate Fe cation.

It belongs to the lipoxygenase family. As to quaternary structure, homodimer. Interacts with ALOX5AP and LTC4S. Interacts with COTL1, the interaction is required for stability and efficient catalytic activity. Interacts with PIK3R1; this interaction bridges ALOX5 with CD40 after CD40 ligation in B cells and leads to the production of reactive oxygen species (ROS). Interacts (via PLAT domain) with DICER1 (via Dicer dsRNA-binding fold domain); this interaction enhances arachidonate 5-lipoxygenase activity and modifies the miRNA precursor processing activity of DICER1. The cofactor is Fe cation. Serine phosphorylation by MAPKAPK2 is stimulated by arachidonic acid. Phosphorylation on Ser-524 by PKA has an inhibitory effect. Phosphorylation on Ser-272 prevents export from the nucleus. Phosphorylation at Ser-524 is stimulated by 8-bromo-3',5'-cyclic AMP or prostaglandin E2. As to expression, expressed in skin Langerhans cells and their emigrated counterparts in draining lymph nodes. Highly expressed in circulating leukocytes.

Its subcellular location is the cytoplasm. The protein resides in the nucleus matrix. The protein localises to the nucleus membrane. It localises to the perinuclear region. It is found in the cytosol. Its subcellular location is the nucleus envelope. The protein resides in the nucleus intermembrane space. The catalysed reaction is (5Z,8Z,11Z,14Z)-eicosatetraenoate + O2 = (5S)-hydroperoxy-(6E,8Z,11Z,14Z)-eicosatetraenoate. It catalyses the reaction (5Z,8Z,11Z,14Z)-eicosatetraenoate + O2 = leukotriene A4 + H2O. The enzyme catalyses (5Z,8Z,11Z,14Z)-eicosatetraenoate + O2 = (8S)-hydroperoxy-(5Z,9E,11Z,14Z)-eicosatetraenoate. It carries out the reaction (5Z,8Z,11Z,14Z)-eicosatetraenoate + O2 = (12S)-hydroperoxy-(5Z,8Z,10E,14Z)-eicosatetraenoate. The catalysed reaction is 18-HEPE + O2 = (5S)-hydroperoxy-18-hydroxy-(7E,9E,11Z,14Z,16E)-eicosapentaenoate. It catalyses the reaction (18R)-hydroxy-(5Z,8Z,11Z,14Z,16E)-eicosapentaenoate + O2 = (5S)-hydroperoxy-(18R)-hydroxy-(6E,8Z,11Z,14Z,16E)-eicosapentaenoate. The enzyme catalyses (18S)-hydroxy-(5Z,8Z,11Z,14Z,16E)-eicosapentaenoate + O2 = (5S)-hydroperoxy-(18S)-hydroxy-(6E,8Z,11Z,14Z,16E)-eicosapentaenoate. It carries out the reaction (5S)-hydroperoxy-(18S)-hydroxy-(6E,8Z,11Z,14Z,16E)-eicosapentaenoate = (5S,6S)-epoxy-(18S)-hydroxy-(7E,9E,11Z,14Z,16E)-eicosapentaenoate + H2O. The catalysed reaction is (5S)-hydroperoxy-(18R)-hydroxy-(6E,8Z,11Z,14Z,16E)-eicosapentaenoate = (5S,6S)-epoxy-(18R)-hydroxy-(7E,9E,11Z,14Z,16E)-eicosapentaenoate + H2O. It catalyses the reaction (5S)-hydroperoxy-18-hydroxy-(7E,9E,11Z,14Z,16E)-eicosapentaenoate = (5S,6S)-epoxy-18-hydroxy-(7E,9E,11Z,14Z,16E)-eicosapentaenoate + H2O. The enzyme catalyses (15S)-hydroxy-(5Z,8Z,11Z,13E)-eicosatetraenoate + O2 = (5S)-hydroperoxy-(15S)-hydroxy-(6E,8Z,11Z,13E)-eicosatetraenoate. It carries out the reaction (5S)-hydroperoxy-(6E,8Z,11Z,14Z)-eicosatetraenoate = leukotriene A4 + H2O. The catalysed reaction is (5Z,8Z)-eicosadienoate + O2 = (5S)-hydroperoxy-(6E,8Z)-eicosadienoate. It catalyses the reaction (12S)-hydroxy-(5Z,8Z,10E,14Z)-eicosatetraenoate + O2 = (5S)-hydroperoxy-(12S)-hydroxy-(6E,8Z,10E,14Z)-eicosatetraenoate. The enzyme catalyses (5Z,8Z,11Z,14Z,17Z)-eicosapentaenoate + O2 = 5-hydroperoxy-(6E,8Z,11Z,14Z,17Z)-eicosapentaenoate. It carries out the reaction (4Z,7Z,10Z,13Z,16Z,19Z)-docosahexaenoate + O2 = (14S)-hydroperoxy-(4Z,7Z,10Z,12E,16Z,19Z)-docosahexaenoate. The catalysed reaction is (4Z,7Z,10Z,13Z,16Z,19Z)-docosahexaenoate + O2 = (7S)-hydroperoxy-(4Z,8E,10Z,13Z,16Z,19Z)-docosahexaenoate. It catalyses the reaction (4Z,7Z,10Z,13Z,16Z,19Z)-docosahexaenoate + O2 = (17S)-hydroperoxy-(4Z,7Z,10Z,13Z,15E,19Z)-docosahexaenoate. The protein operates within lipid metabolism; leukotriene A4 biosynthesis. Functionally, catalyzes the oxygenation of arachidonate to 5-hydroperoxyeicosatetraenoate (5-HPETE) followed by the dehydration to 5,6- epoxyeicosatetraenoate (Leukotriene A4/LTA4), the first two steps in the biosynthesis of leukotrienes, which are potent mediators of inflammation. Also catalyzes the oxygenation of arachidonic acid into 8-hydroperoxyicosatetraenoic acid (8-HPETE) and 12-hydroperoxyicosatetraenoic acid (12-HPETE). Displays lipoxin synthase activity being able to convert (15S)-HETE into a conjugate tetraene. Although arachidonate is the preferred substrate, this enzyme can also metabolize oxidized fatty acids derived from arachidonate such as (15S)-HETE, eicosapentaenoate (EPA) such as (18R)- and (18S)-HEPE or docosahexaenoate (DHA) which lead to the formation of specialized pro-resolving mediators (SPM) lipoxin and resolvins E and D respectively, therefore it participates in anti-inflammatory responses. Oxidation of DHA directly inhibits endothelial cell proliferation and sprouting angiogenesis via peroxisome proliferator-activated receptor gamma (PPARgamma). It does not catalyze the oxygenation of linoleic acid and does not convert (5S)-HETE to lipoxin isomers. In addition to inflammatory processes, participates in dendritic cell migration, wound healing through an antioxidant mechanism based on heme oxygenase-1 (HO-1) regulation expression, monocyte adhesion to the endothelium via ITGAM expression on monocytes. Moreover, it helps establish an adaptive humoral immunity by regulating primary resting B cells and follicular helper T cells and participates in the CD40-induced production of reactive oxygen species (ROS) after CD40 ligation in B cells through interaction with PIK3R1 that bridges ALOX5 with CD40. May also play a role in glucose homeostasis, regulation of insulin secretion and palmitic acid-induced insulin resistance via AMPK. Can regulate bone mineralization and fat cell differentiation increases in induced pluripotent stem cells. The chain is Polyunsaturated fatty acid 5-lipoxygenase from Mus musculus (Mouse).